Here is a 734-residue protein sequence, read N- to C-terminus: Photosystem I P700 chlorophyll a apoprotein A2 (734 aa).

8 helical membrane-spanning segments follow: residues isoleucine 46–alanine 69, leucine 135–glutamine 158, leucine 175–isoleucine 199, isoleucine 273–tyrosine 291, isoleucine 330–tyrosine 353, alanine 369–isoleucine 395, alanine 417–histidine 439, and phenylalanine 517–valine 535. Residues cysteine 559 and cysteine 568 each contribute to the [4Fe-4S] cluster site. The next 2 helical transmembrane spans lie at alanine 575–tryptophan 596 and leucine 643–isoleucine 665. Residues histidine 654, methionine 662, and tyrosine 670 each coordinate chlorophyll a. A phylloquinone-binding site is contributed by tryptophan 671. A helical transmembrane segment spans residues leucine 707–alanine 727.

It belongs to the PsaA/PsaB family. In terms of assembly, the PsaA/B heterodimer binds the P700 chlorophyll special pair and subsequent electron acceptors. PSI consists of a core antenna complex that captures photons, and an electron transfer chain that converts photonic excitation into a charge separation. The eukaryotic PSI reaction center is composed of at least 11 subunits. It depends on P700 is a chlorophyll a/chlorophyll a' dimer, A0 is one or more chlorophyll a, A1 is one or both phylloquinones and FX is a shared 4Fe-4S iron-sulfur center. as a cofactor.

The protein localises to the plastid. It is found in the chloroplast thylakoid membrane. It catalyses the reaction reduced [plastocyanin] + hnu + oxidized [2Fe-2S]-[ferredoxin] = oxidized [plastocyanin] + reduced [2Fe-2S]-[ferredoxin]. Its function is as follows. PsaA and PsaB bind P700, the primary electron donor of photosystem I (PSI), as well as the electron acceptors A0, A1 and FX. PSI is a plastocyanin-ferredoxin oxidoreductase, converting photonic excitation into a charge separation, which transfers an electron from the donor P700 chlorophyll pair to the spectroscopically characterized acceptors A0, A1, FX, FA and FB in turn. Oxidized P700 is reduced on the lumenal side of the thylakoid membrane by plastocyanin. The chain is Photosystem I P700 chlorophyll a apoprotein A2 from Morus indica (Mulberry).